A 181-amino-acid chain; its full sequence is ATP synthase subunit delta (181 aa).

Belongs to the ATPase delta chain family. F-type ATPases have 2 components, F(1) - the catalytic core - and F(0) - the membrane proton channel. F(1) has five subunits: alpha(3), beta(3), gamma(1), delta(1), epsilon(1). F(0) has three main subunits: a(1), b(2) and c(10-14). The alpha and beta chains form an alternating ring which encloses part of the gamma chain. F(1) is attached to F(0) by a central stalk formed by the gamma and epsilon chains, while a peripheral stalk is formed by the delta and b chains.

Its subcellular location is the cell inner membrane. F(1)F(0) ATP synthase produces ATP from ADP in the presence of a proton or sodium gradient. F-type ATPases consist of two structural domains, F(1) containing the extramembraneous catalytic core and F(0) containing the membrane proton channel, linked together by a central stalk and a peripheral stalk. During catalysis, ATP synthesis in the catalytic domain of F(1) is coupled via a rotary mechanism of the central stalk subunits to proton translocation. Its function is as follows. This protein is part of the stalk that links CF(0) to CF(1). It either transmits conformational changes from CF(0) to CF(1) or is implicated in proton conduction. The protein is ATP synthase subunit delta of Blochmanniella pennsylvanica (strain BPEN).